Reading from the N-terminus, the 473-residue chain is Photosystem II CP43 reaction center protein (473 aa).

Positions 1–14 (MKTLYSPRRFYPVE) are excised as a propeptide. Position 15 is an N-acetylthreonine (threonine 15). A Phosphothreonine modification is found at threonine 15. 5 helical membrane-spanning segments follow: residues 69–93 (LFEV…PHLA), 134–155 (LLGP…KDRN), 178–200 (KALY…RKIS), 255–275 (KPFA…LSYS), and 291–312 (WFNN…ASQA). Glutamate 367 is a [CaMn4O5] cluster binding site. The helical transmembrane segment at 447-471 (RARAAAAGFEKGIDRDLEPVLFMTP) threads the bilayer.

It belongs to the PsbB/PsbC family. PsbC subfamily. PSII is composed of 1 copy each of membrane proteins PsbA, PsbB, PsbC, PsbD, PsbE, PsbF, PsbH, PsbI, PsbJ, PsbK, PsbL, PsbM, PsbT, PsbX, PsbY, PsbZ, Psb30/Ycf12, at least 3 peripheral proteins of the oxygen-evolving complex and a large number of cofactors. It forms dimeric complexes. Binds multiple chlorophylls and provides some of the ligands for the Ca-4Mn-5O cluster of the oxygen-evolving complex. It may also provide a ligand for a Cl- that is required for oxygen evolution. PSII binds additional chlorophylls, carotenoids and specific lipids. serves as cofactor.

It localises to the plastid. It is found in the chloroplast thylakoid membrane. Its function is as follows. One of the components of the core complex of photosystem II (PSII). It binds chlorophyll and helps catalyze the primary light-induced photochemical processes of PSII. PSII is a light-driven water:plastoquinone oxidoreductase, using light energy to abstract electrons from H(2)O, generating O(2) and a proton gradient subsequently used for ATP formation. This Ranunculus macranthus (Large buttercup) protein is Photosystem II CP43 reaction center protein.